A 300-amino-acid polypeptide reads, in one-letter code: Probable acetyltransferase Rv3034c (300 aa).

An N-terminal signal peptide occupies residues 1 to 25 (MNVLSLGSSSGVVWGRVPITAPAGA).

The protein belongs to the transferase hexapeptide repeat family.

Its function is as follows. May be involved in the biosynthesis of 6-O-methylglucosyl-containing lipopolysaccharides (MGLP). In terms of biological role, regulates host peroxisome homeostasis in response to intracellular redox levels to favor mycobacterial infection in macrophage. Induces the expression of host peroxisome biogenesis and proliferation factors as well as peroxisome associated enzymes. Inhibits the induction of host pexophagy mechanism by down-regulating the expression of pexophagy associated proteins and adapter molecules in infected macrophages. However, during increased oxidative stress conditions, it induces degradation of dysfunctional and damaged peroxisomes. Regulation of peroxisome biogenesis and degradation is dependent upon host p-mTORC1 mediated signaling pathway. The polypeptide is Probable acetyltransferase Rv3034c (Mycobacterium tuberculosis (strain ATCC 25618 / H37Rv)).